The following is a 651-amino-acid chain: Aspartate--tRNA ligase, mitochondrial (651 aa).

Residues 1–44 (MFCWLSRLCGELSTPTRRTTQLIWSSAARSMVLSSQRIPELSSF) constitute a mitochondrion transit peptide. A Phosphothreonine modification is found at Thr216. A Phosphoserine modification is found at Ser239. Residues 241-244 (QQFK) are aspartate. Arg263 contacts L-aspartate. Position 263–265 (263–265 (RDE)) interacts with ATP. Residue Lys379 is modified to N6-acetyllysine. Glu532 provides a ligand contact to ATP. Position 539 (Arg539) interacts with L-aspartate. 581-584 (GLDR) lines the ATP pocket.

The protein belongs to the class-II aminoacyl-tRNA synthetase family. Type 1 subfamily. As to quaternary structure, homodimer.

The protein resides in the mitochondrion matrix. Its subcellular location is the mitochondrion membrane. It catalyses the reaction tRNA(Asp) + L-aspartate + ATP = L-aspartyl-tRNA(Asp) + AMP + diphosphate. Catalyzes the attachment of aspartate to tRNA(Asp) in a two-step reaction: aspartate is first activated by ATP to form Asp-AMP and then transferred to the acceptor end of tRNA(Asp). The polypeptide is Aspartate--tRNA ligase, mitochondrial (DARS2) (Bos taurus (Bovine)).